The sequence spans 280 residues: Delta(3,5)-Delta(2,4)-dienoyl-CoA isomerase (280 aa).

Catalysis depends on Glu-154, which acts as the Proton donor/acceptor. Residues 278–280 (HKL) carry the Peroxisome targeting signal (PTS1) motif.

It belongs to the enoyl-CoA hydratase/isomerase family.

The protein localises to the cytoplasm. It is found in the cytosol. Its subcellular location is the peroxisome. It catalyses the reaction a (3E,5Z)-dienoyl-CoA = a (2E,4E)-(5,6-saturated)-dienoyl-CoA. It functions in the pathway lipid metabolism; fatty acid beta-oxidation. Peroxisomal di-isomerase that is involved in fatty acid metabolism enzyme by converting 3,5-dienoyl-CoAs to the corresponding 2,4-dienoyl-CoAs. Involved in fatty acid beta-oxidation, which is important for lipid droplets degradation and infectious growth. The polypeptide is Delta(3,5)-Delta(2,4)-dienoyl-CoA isomerase (Pyricularia oryzae (strain 70-15 / ATCC MYA-4617 / FGSC 8958) (Rice blast fungus)).